The following is a 668-amino-acid chain: Threonine--tRNA ligase (668 aa).

The TGS domain occupies Met1–Arg64. The tract at residues Asp245 to Pro553 is catalytic. Residues Cys347, His398, and His530 each coordinate Zn(2+).

The protein belongs to the class-II aminoacyl-tRNA synthetase family. As to quaternary structure, homodimer. Zn(2+) is required as a cofactor.

The protein resides in the cytoplasm. It carries out the reaction tRNA(Thr) + L-threonine + ATP = L-threonyl-tRNA(Thr) + AMP + diphosphate + H(+). Functionally, catalyzes the attachment of threonine to tRNA(Thr) in a two-step reaction: L-threonine is first activated by ATP to form Thr-AMP and then transferred to the acceptor end of tRNA(Thr). Also edits incorrectly charged L-seryl-tRNA(Thr). The sequence is that of Threonine--tRNA ligase from Rhizobium etli (strain ATCC 51251 / DSM 11541 / JCM 21823 / NBRC 15573 / CFN 42).